We begin with the raw amino-acid sequence, 197 residues long: Imidazoleglycerol-phosphate dehydratase (197 aa).

The protein belongs to the imidazoleglycerol-phosphate dehydratase family.

It is found in the cytoplasm. The catalysed reaction is D-erythro-1-(imidazol-4-yl)glycerol 3-phosphate = 3-(imidazol-4-yl)-2-oxopropyl phosphate + H2O. It participates in amino-acid biosynthesis; L-histidine biosynthesis; L-histidine from 5-phospho-alpha-D-ribose 1-diphosphate: step 6/9. The polypeptide is Imidazoleglycerol-phosphate dehydratase (Pseudomonas aeruginosa (strain LESB58)).